We begin with the raw amino-acid sequence, 266 residues long: 4-hydroxy-tetrahydrodipicolinate reductase (266 aa).

Residues 7 to 12, Glu-33, 96 to 98, and 120 to 123 each bind NAD(+); these read GTIGRM, GTT, and APNM. Residue His-153 is the Proton donor/acceptor of the active site. His-154 contacts (S)-2,3,4,5-tetrahydrodipicolinate. Catalysis depends on Lys-157, which acts as the Proton donor. 163 to 164 is a binding site for (S)-2,3,4,5-tetrahydrodipicolinate; sequence GT.

It belongs to the DapB family.

It is found in the cytoplasm. It carries out the reaction (S)-2,3,4,5-tetrahydrodipicolinate + NAD(+) + H2O = (2S,4S)-4-hydroxy-2,3,4,5-tetrahydrodipicolinate + NADH + H(+). It catalyses the reaction (S)-2,3,4,5-tetrahydrodipicolinate + NADP(+) + H2O = (2S,4S)-4-hydroxy-2,3,4,5-tetrahydrodipicolinate + NADPH + H(+). It functions in the pathway amino-acid biosynthesis; L-lysine biosynthesis via DAP pathway; (S)-tetrahydrodipicolinate from L-aspartate: step 4/4. Catalyzes the conversion of 4-hydroxy-tetrahydrodipicolinate (HTPA) to tetrahydrodipicolinate. The sequence is that of 4-hydroxy-tetrahydrodipicolinate reductase from Polynucleobacter necessarius subsp. necessarius (strain STIR1).